Reading from the N-terminus, the 126-residue chain is Large ribosomal subunit protein uL22 (126 aa).

Belongs to the universal ribosomal protein uL22 family. Part of the 50S ribosomal subunit.

This protein binds specifically to 23S rRNA; its binding is stimulated by other ribosomal proteins, e.g. L4, L17, and L20. It is important during the early stages of 50S assembly. It makes multiple contacts with different domains of the 23S rRNA in the assembled 50S subunit and ribosome. In terms of biological role, the globular domain of the protein is located near the polypeptide exit tunnel on the outside of the subunit, while an extended beta-hairpin is found that lines the wall of the exit tunnel in the center of the 70S ribosome. The protein is Large ribosomal subunit protein uL22 of Maricaulis maris (strain MCS10) (Caulobacter maris).